Here is a 421-residue protein sequence, read N- to C-terminus: Exoskeleton protein RP43 (421 aa).

The signal sequence occupies residues 1-24 (MRVIFVISLVSFMFVTWQTNPVHC). Intrachain disulfides connect C72–C104, C132–C154, C193–C219, C247–C269, C309–C335, and C362–C384. CUB domains are found at residues 72 to 191 (CSKP…YSIV), 193 to 306 (CNSL…YSVP), and 309 to 421 (CSVV…YTTG).

Detected in vestimentum and trunk but not in opisthosome or obturaculum. In the vestimentum, expression is restricted to epithelial cells under apical cuticular plaques.

Functionally, may play a role in protein-protein interactions during tube assembly. The chain is Exoskeleton protein RP43 from Riftia pachyptila (Vent tube worm).